We begin with the raw amino-acid sequence, 136 residues long: Small ribosomal subunit protein uS19 (136 aa).

The protein belongs to the universal ribosomal protein uS19 family.

Protein S19 forms a complex with S13 that binds strongly to the 16S ribosomal RNA. The chain is Small ribosomal subunit protein uS19 from Methanosphaera stadtmanae (strain ATCC 43021 / DSM 3091 / JCM 11832 / MCB-3).